Here is a 189-residue protein sequence, read N- to C-terminus: Chitin synthase 1 (189 aa).

The protein belongs to the chitin synthase family.

The protein resides in the cell membrane. It catalyses the reaction [(1-&gt;4)-N-acetyl-beta-D-glucosaminyl](n) + UDP-N-acetyl-alpha-D-glucosamine = [(1-&gt;4)-N-acetyl-beta-D-glucosaminyl](n+1) + UDP + H(+). Its function is as follows. Polymerizes chitin, a structural polymer of the cell wall and septum, by transferring the sugar moiety of UDP-GlcNAc to the non-reducing end of the growing chitin polymer. This is Chitin synthase 1 (CHS1) from Exophiala exophialae (Black yeast-like fungus).